Reading from the N-terminus, the 503-residue chain is Poxin-Schlafen (503 aa).

The poxin-like stretch occupies residues 1–236 (MFYAHAFGGY…SKEERVDYVL (236 aa)). His-15 (proton donor) is an active-site residue. The Shared with catalytic histidine of dimeric partner role is filled by Tyr-136. The active-site Proton acceptor; shared with catalytic histidine of dimeric partner is the Lys-140. The segment at 237–503 (MKRLESIHHL…PDEWVSHIKF (267 aa)) is schlafen-like.

This sequence in the N-terminal section; belongs to the poxin family. In the C-terminal section; belongs to the Schlafen protein family. Subgroup poxviridae B3 subfamily. In terms of assembly, homodimer.

It carries out the reaction 2',3'-cGAMP + H2O = Gp(2'-5')Ap(3') + H(+). In terms of biological role, nuclease that is responsible for viral evasion of host cGAS-STING innate immunity. Cleaves 2',3'-cGAMP which is produced by host cGAS following recognition of intracellular foreign DNA and blocks the subsequent 2',3'-cGAMP-mediated activation of TMEM173/STING which normally spreads to adjacent cells and activates the interferon and NF-kappa-B immune responses. In Cynomys gunnisoni (Gunnison's prairie dog), this protein is Poxin-Schlafen (OPG188).